Here is a 278-residue protein sequence, read N- to C-terminus: Sulfur carrier protein FdhD (278 aa).

Cys-124 acts as the Cysteine persulfide intermediate in catalysis.

It belongs to the FdhD family.

The protein resides in the cytoplasm. Required for formate dehydrogenase (FDH) activity. Acts as a sulfur carrier protein that transfers sulfur from IscS to the molybdenum cofactor prior to its insertion into FDH. This Burkholderia cenocepacia (strain ATCC BAA-245 / DSM 16553 / LMG 16656 / NCTC 13227 / J2315 / CF5610) (Burkholderia cepacia (strain J2315)) protein is Sulfur carrier protein FdhD.